A 185-amino-acid chain; its full sequence is Acireductone dioxygenase (185 aa).

His-96, His-98, Glu-102, and His-140 together coordinate Fe(2+). Residues His-96, His-98, Glu-102, and His-140 each contribute to the Ni(2+) site.

This sequence belongs to the acireductone dioxygenase (ARD) family. As to quaternary structure, monomer. The cofactor is Fe(2+). It depends on Ni(2+) as a cofactor.

It catalyses the reaction 1,2-dihydroxy-5-(methylsulfanyl)pent-1-en-3-one + O2 = 3-(methylsulfanyl)propanoate + CO + formate + 2 H(+). It carries out the reaction 1,2-dihydroxy-5-(methylsulfanyl)pent-1-en-3-one + O2 = 4-methylsulfanyl-2-oxobutanoate + formate + 2 H(+). It functions in the pathway amino-acid biosynthesis; L-methionine biosynthesis via salvage pathway; L-methionine from S-methyl-5-thio-alpha-D-ribose 1-phosphate: step 5/6. Its function is as follows. Catalyzes 2 different reactions between oxygen and the acireductone 1,2-dihydroxy-3-keto-5-methylthiopentene (DHK-MTPene) depending upon the metal bound in the active site. Fe-containing acireductone dioxygenase (Fe-ARD) produces formate and 2-keto-4-methylthiobutyrate (KMTB), the alpha-ketoacid precursor of methionine in the methionine recycle pathway. Ni-containing acireductone dioxygenase (Ni-ARD) produces methylthiopropionate, carbon monoxide and formate, and does not lie on the methionine recycle pathway. The sequence is that of Acireductone dioxygenase from Hahella chejuensis (strain KCTC 2396).